A 90-amino-acid chain; its full sequence is Guanine nucleotide-binding protein subunit gamma (90 aa).

The S-palmitoyl cysteine moiety is linked to residue Cys86. Cys87 is subject to Cysteine methyl ester. Cys87 carries S-farnesyl cysteine lipidation. Positions 88-90 (CIM) are cleaved as a propeptide — removed in mature form.

The protein belongs to the G protein gamma family. In terms of assembly, g proteins are composed of 3 units, alpha, beta and gamma.

The protein resides in the membrane. The polypeptide is Guanine nucleotide-binding protein subunit gamma (Eremothecium gossypii (strain ATCC 10895 / CBS 109.51 / FGSC 9923 / NRRL Y-1056) (Yeast)).